The chain runs to 376 residues: Transmembrane protein 43 homolog (376 aa).

Residues 1–10 lie on the Cytoplasmic side of the membrane; that stretch reads MASLSETLRS. The chain crosses the membrane as a helical span at residues 11–31; that stretch reads HWPIALFGVILFVAGGTELYW. Over 32-277 the chain is Lumenal; the sequence is NEGRAVHNMM…EVFRLEARAQ (246 aa). Residues 278 to 298 traverse the membrane as a helical segment; it reads VLHTWWWRFVGWLLIFFGVTC. At 299-323 the chain is on the cytoplasmic side; it reads NTKILRLLFVRVPLLVALAPDPQFP. The next 2 membrane-spanning stretches (helical) occupy residues 324–344 and 345–365; these read VTGN…VAWI and LHRP…YVWF. Over 366-376 the chain is Cytoplasmic; that stretch reads TRNLVDYHRLD.

This sequence belongs to the TMEM43 family.

Its subcellular location is the endoplasmic reticulum membrane. It localises to the nucleus envelope. Its function is as follows. Involved in lipid metabolism and utilization. In Drosophila melanogaster (Fruit fly), this protein is Transmembrane protein 43 homolog.